The primary structure comprises 150 residues: uncharacterized protein (150 aa).

4 consecutive transmembrane segments (helical) span residues 12-30 (IVQRIISLLTIILLAYFLF), 40-62 (RLLSLATIVLLASFLFIIFLVLF), 74-96 (IRRTIAIVTTSFYFGTLSMVLSG), and 106-128 (ALIDGLKWAFMVVVAFYFGSRAV).

The protein resides in the cell membrane. This is an uncharacterized protein from Archaeoglobus fulgidus (strain ATCC 49558 / DSM 4304 / JCM 9628 / NBRC 100126 / VC-16).